The following is a 478-amino-acid chain: DNA-directed RNA polymerase subunit alpha (478 aa).

The tract at residues 1–341 (MNKKIQDFFL…LDCMRLLNYE (341 aa)) is alpha N-terminal domain (alpha-NTD). Residues 365-478 (RFYNSREDKT…KLGSRNEKNL (114 aa)) form an alpha C-terminal domain (alpha-CTD) region.

It belongs to the RNA polymerase alpha chain family. In plastids the minimal PEP RNA polymerase catalytic core is composed of four subunits: alpha, beta, beta', and beta''. When a (nuclear-encoded) sigma factor is associated with the core the holoenzyme is formed, which can initiate transcription.

Its subcellular location is the plastid. The protein localises to the chloroplast. It carries out the reaction RNA(n) + a ribonucleoside 5'-triphosphate = RNA(n+1) + diphosphate. Its function is as follows. DNA-dependent RNA polymerase catalyzes the transcription of DNA into RNA using the four ribonucleoside triphosphates as substrates. In Tetradesmus obliquus (Green alga), this protein is DNA-directed RNA polymerase subunit alpha (rpoA).